Consider the following 309-residue polypeptide: Hydroxyacylglutathione hydrolase, mitochondrial (309 aa).

The N-terminal 24 residues, 1-24 (MVLGRGSLCLRSLSVLGAACARRG), are a transit peptide targeting the mitochondrion. At Lys-90 the chain carries N6-acetyllysine. Zn(2+) is bound by residues His-103, His-105, Asp-107, and His-108. Lys-117 is modified (N6-acetyllysine). Zn(2+) is bound by residues His-159 and Asp-183. Residues 192–194 (KFY) and 222–224 (HEY) contribute to the substrate site. Position 222 (His-222) interacts with Zn(2+). Lys-230 is modified (N6-acetyllysine; alternate). N6-succinyllysine; alternate is present on Lys-230. 298-301 (RREK) lines the substrate pocket.

It belongs to the metallo-beta-lactamase superfamily. Glyoxalase II family. Monomer. It depends on Zn(2+) as a cofactor. Strongly expressed in testis, skeletal muscle and heart. Weakly expressed in placenta, pancreas, spleen and peripheral blood leukocytes.

Its subcellular location is the mitochondrion matrix. The protein localises to the cytoplasm. It catalyses the reaction an S-(2-hydroxyacyl)glutathione + H2O = a 2-hydroxy carboxylate + glutathione + H(+). It carries out the reaction (R)-S-lactoylglutathione + H2O = (R)-lactate + glutathione + H(+). It functions in the pathway secondary metabolite metabolism; methylglyoxal degradation; (R)-lactate from methylglyoxal: step 2/2. In terms of biological role, thiolesterase that catalyzes the hydrolysis of S-D-lactoyl-glutathione to form glutathione and D-lactic acid. This Rattus norvegicus (Rat) protein is Hydroxyacylglutathione hydrolase, mitochondrial (Hagh).